The sequence spans 868 residues: DNA mismatch repair protein MutS (868 aa).

An ATP-binding site is contributed by 620–627; that stretch reads GPNMGGKS.

It belongs to the DNA mismatch repair MutS family.

Its function is as follows. This protein is involved in the repair of mismatches in DNA. It is possible that it carries out the mismatch recognition step. This protein has a weak ATPase activity. In Xylella fastidiosa (strain 9a5c), this protein is DNA mismatch repair protein MutS.